A 681-amino-acid polypeptide reads, in one-letter code: Amine oxidase [copper-containing] alpha 3, peroxisomal (681 aa).

323 to 334 (YLDCGDFGCGQC) contributes to the substrate binding site. Aspartate 325 serves as the catalytic Proton acceptor. An intrachain disulfide couples cysteine 344 to cysteine 370. 410–415 (VGNYDY) lines the substrate pocket. Catalysis depends on tyrosine 413, which acts as the Schiff-base intermediate with substrate; via topaquinone. A 2',4',5'-topaquinone modification is found at tyrosine 413. Cu cation is bound by residues histidine 470 and histidine 472. Positions 481, 621, and 622 each coordinate Mn(2+). Histidine 632 lines the Cu cation pocket.

The protein belongs to the copper/topaquinone oxidase family. Post-translationally, topaquinone (TPQ) is generated by copper-dependent autoxidation of a specific tyrosyl residue. As to expression, mostly expressed in stems, and, at lower levels, in flowers and leaves. Mainly detectable in stipules, hypocotyls and roots.

The protein resides in the peroxisome. The catalysed reaction is a primary methyl amine + O2 + H2O = an aldehyde + H2O2 + NH4(+). It participates in amine and polyamine degradation; putrescine degradation. Copper amine oxidase that can use putrescine and spermidine as substrates. Involved in putrescine catabolism in peroxisomes. In Arabidopsis thaliana (Mouse-ear cress), this protein is Amine oxidase [copper-containing] alpha 3, peroxisomal.